We begin with the raw amino-acid sequence, 139 residues long: ATP synthase epsilon chain (139 aa).

Belongs to the ATPase epsilon chain family. F-type ATPases have 2 components, CF(1) - the catalytic core - and CF(0) - the membrane proton channel. CF(1) has five subunits: alpha(3), beta(3), gamma(1), delta(1), epsilon(1). CF(0) has three main subunits: a, b and c.

It is found in the cell inner membrane. Produces ATP from ADP in the presence of a proton gradient across the membrane. This is ATP synthase epsilon chain from Pectobacterium carotovorum subsp. carotovorum (strain PC1).